Reading from the N-terminus, the 1192-residue chain is DNA topoisomerase 2 (1192 aa).

ATP-binding positions include Asn-64, Asn-95, and 142–149 (GTNGVGLK). Residues Glu-438, Asp-539, and Asp-541 each contribute to the Mg(2+) site. Residues 707–1174 (IPNFLDGMTR…PGASVWLEEI (468 aa)) enclose the Topo IIA-type catalytic domain. Tyr-800 acts as the O-(5'-phospho-DNA)-tyrosine intermediate in catalysis.

The protein belongs to the type II topoisomerase family. The cofactor is Mg(2+). It depends on Mn(2+) as a cofactor. Ca(2+) is required as a cofactor.

The protein localises to the host cytoplasm. It carries out the reaction ATP-dependent breakage, passage and rejoining of double-stranded DNA.. Its function is as follows. Type II topoisomerase. Processively relaxes supercoiled DNA. Displays DNA-supercoiling activity only when associated with the viral histone-like protein. This African swine fever virus (strain Badajoz 1971 Vero-adapted) (Ba71V) protein is DNA topoisomerase 2 (TOP).